We begin with the raw amino-acid sequence, 632 residues long: Threonine--tRNA ligase (632 aa).

The 61-residue stretch at 1–61 (MPIITLPDGT…KTDANLAIIT (61 aa)) folds into the TGS domain. A catalytic region spans residues 242–533 (DHRKIGKIQD…LIEHYEGAYP (292 aa)). The Zn(2+) site is built by C333, H384, and H510.

Belongs to the class-II aminoacyl-tRNA synthetase family. Homodimer. Zn(2+) serves as cofactor.

The protein resides in the cytoplasm. The enzyme catalyses tRNA(Thr) + L-threonine + ATP = L-threonyl-tRNA(Thr) + AMP + diphosphate + H(+). Catalyzes the attachment of threonine to tRNA(Thr) in a two-step reaction: L-threonine is first activated by ATP to form Thr-AMP and then transferred to the acceptor end of tRNA(Thr). Also edits incorrectly charged L-seryl-tRNA(Thr). The polypeptide is Threonine--tRNA ligase (Ruthia magnifica subsp. Calyptogena magnifica).